Consider the following 123-residue polypeptide: Small ribosomal subunit protein uS12 (123 aa).

Position 89 is a 3-methylthioaspartic acid (Asp89). The tract at residues 104 to 123 (TAGVKDRKQARSKYGAKRPK) is disordered. Residues 113–123 (ARSKYGAKRPK) are compositionally biased toward basic residues.

The protein belongs to the universal ribosomal protein uS12 family. As to quaternary structure, part of the 30S ribosomal subunit. Contacts proteins S8 and S17. May interact with IF1 in the 30S initiation complex.

In terms of biological role, with S4 and S5 plays an important role in translational accuracy. Interacts with and stabilizes bases of the 16S rRNA that are involved in tRNA selection in the A site and with the mRNA backbone. Located at the interface of the 30S and 50S subunits, it traverses the body of the 30S subunit contacting proteins on the other side and probably holding the rRNA structure together. The combined cluster of proteins S8, S12 and S17 appears to hold together the shoulder and platform of the 30S subunit. The protein is Small ribosomal subunit protein uS12 of Neisseria gonorrhoeae (strain ATCC 700825 / FA 1090).